A 343-amino-acid polypeptide reads, in one-letter code: Heat-inducible transcription repressor HrcA (343 aa).

This sequence belongs to the HrcA family.

In terms of biological role, negative regulator of class I heat shock genes (grpE-dnaK-dnaJ and groELS operons). Prevents heat-shock induction of these operons. This Leptospira biflexa serovar Patoc (strain Patoc 1 / Ames) protein is Heat-inducible transcription repressor HrcA.